The sequence spans 170 residues: Adenine phosphoribosyltransferase (170 aa).

The protein belongs to the purine/pyrimidine phosphoribosyltransferase family. Homodimer.

It localises to the cytoplasm. It carries out the reaction AMP + diphosphate = 5-phospho-alpha-D-ribose 1-diphosphate + adenine. Its pathway is purine metabolism; AMP biosynthesis via salvage pathway; AMP from adenine: step 1/1. In terms of biological role, catalyzes a salvage reaction resulting in the formation of AMP, that is energically less costly than de novo synthesis. The sequence is that of Adenine phosphoribosyltransferase from Streptococcus pneumoniae (strain Hungary19A-6).